The chain runs to 285 residues: Homeobox protein Hox-A4 (285 aa).

Disordered regions lie at residues 19–70 (PFEE…APRA) and 94–130 (ASPG…TTPA). Residues 27-41 (GGPGGGDGAVGGGPG) show a composition bias toward gly residues. Low complexity predominate over residues 44-70 (RPQSAPHLPAPNPHAARQPPAYYAPRA). Pro residues predominate over residues 106–118 (GAHPSPAPQPPVP). The short motif at 159–164 (VYPWMK) is the Antp-type hexapeptide element. A DNA-binding region (homeobox) is located at residues 180 to 239 (PKRSRTAYTRQQVLELEKEFHFNRYLTRRRRIEIAHTLCLSERQVKIWFQNRRMKWKKDH). The disordered stretch occupies residues 238–285 (DHKLPNTKMRSSNTASAPAGPPGKAQTHSPHHHPHPLPGASTPIPSSI).

Belongs to the Antp homeobox family. Deformed subfamily.

Its subcellular location is the nucleus. Its function is as follows. Sequence-specific transcription factor which is part of a developmental regulatory system that provides cells with specific positional identities on the anterior-posterior axis. Binds to sites in the 5'-flanking sequence of its coding region with various affinities. The consensus sequences of the high and low affinity binding sites are 5'-TAATGA[CG]-3' and 5'-CTAATTTT-3'. The polypeptide is Homeobox protein Hox-A4 (Hoxa4) (Mus musculus (Mouse)).